A 322-amino-acid polypeptide reads, in one-letter code: Cyclin mcs2 (322 aa).

S310 carries the phosphoserine modification.

The protein belongs to the cyclin family. Cyclin C subfamily. As to quaternary structure, one of the nine subunits forming the core-TFIIH basal transcription factor. Interacts with crk1 and skp1.

Its subcellular location is the nucleus. Its function is as follows. Essential for progression through the cell cycle. Possesses kinase activity that can be detected when myelin basic protein (MBP) is provided as an exogenous substrate. This Schizosaccharomyces pombe (strain 972 / ATCC 24843) (Fission yeast) protein is Cyclin mcs2 (mcs2).